A 152-amino-acid chain; its full sequence is SUZ RNA-binding domain-containing (152 aa).

Disordered stretches follow at residues 30 to 86 (TQKE…FPVK) and 100 to 152 (KRIL…KQRR). In terms of domain architecture, SUZ spans 42–107 (KVPIVIQDDS…ARKRILGSAS (66 aa)). Polar residues predominate over residues 70-80 (GVLSNPNSTTR). One can recognise an SUZ-C domain in the interval 111–152 (EQEKPILDRPTRISQPEDIRQPNNVIRQPLGPDGSQGFKQRR). A compositionally biased stretch (basic and acidic residues) spans 113 to 130 (EKPILDRPTRISQPEDIR).

Belongs to the SZRD1 family.

This is SUZ RNA-binding domain-containing (SZRD1) from Gallus gallus (Chicken).